Here is a 448-residue protein sequence, read N- to C-terminus: Trigger factor (448 aa).

One can recognise a PPIase FKBP-type domain in the interval 162 to 243 (GDFVQIDLNA…VRTVKEKELP (82 aa)).

Belongs to the FKBP-type PPIase family. Tig subfamily.

It localises to the cytoplasm. It carries out the reaction [protein]-peptidylproline (omega=180) = [protein]-peptidylproline (omega=0). Involved in protein export. Acts as a chaperone by maintaining the newly synthesized protein in an open conformation. Functions as a peptidyl-prolyl cis-trans isomerase. In Salinispora arenicola (strain CNS-205), this protein is Trigger factor.